Reading from the N-terminus, the 296-residue chain is Acetylglutamate kinase (296 aa).

Substrate contacts are provided by residues 68–69 (GG), Arg90, and Asn195.

It belongs to the acetylglutamate kinase family. ArgB subfamily.

The protein resides in the cytoplasm. The catalysed reaction is N-acetyl-L-glutamate + ATP = N-acetyl-L-glutamyl 5-phosphate + ADP. It participates in amino-acid biosynthesis; L-arginine biosynthesis; N(2)-acetyl-L-ornithine from L-glutamate: step 2/4. Its function is as follows. Catalyzes the ATP-dependent phosphorylation of N-acetyl-L-glutamate. This Desulfotalea psychrophila (strain LSv54 / DSM 12343) protein is Acetylglutamate kinase.